A 315-amino-acid polypeptide reads, in one-letter code: CID domain-containing protein 1 (315 aa).

Positions 1-135 (MADFTEQTLR…RLHEVHQQVK (135 aa)) constitute a CID domain. Residues 227–273 (MLEEYVKRLKNETNERETLESNLNMLIENVRMSIEHHEKLCREVKRR) adopt a coiled-coil conformation.

This is CID domain-containing protein 1 (cids-1) from Caenorhabditis elegans.